The primary structure comprises 527 residues: Glutamate--cysteine ligase (527 aa).

Belongs to the glutamate--cysteine ligase type 1 family. Type 1 subfamily.

The enzyme catalyses L-cysteine + L-glutamate + ATP = gamma-L-glutamyl-L-cysteine + ADP + phosphate + H(+). It functions in the pathway sulfur metabolism; glutathione biosynthesis; glutathione from L-cysteine and L-glutamate: step 1/2. The chain is Glutamate--cysteine ligase from Bordetella petrii (strain ATCC BAA-461 / DSM 12804 / CCUG 43448).